A 388-amino-acid chain; its full sequence is GTPase Obg (388 aa).

The Obg domain maps to 1 to 159; sequence MKFVDEATIR…RSLRLELMLL (159 aa). Residues 160–333 enclose the OBG-type G domain; the sequence is ADVGLLGMPN…LALKLLDFID (174 aa). Residues 166-173, 191-195, 213-216, 283-286, and 314-316 each bind GTP; these read GMPNAGKS, FTTLV, DIPG, NKAD, and SAY. 2 residues coordinate Mg(2+): Ser173 and Thr193. The interval 356–377 is disordered; that stretch reads QNANESVNEDYDDDLDDDDYDD. A compositionally biased stretch (acidic residues) spans 362–377; it reads VNEDYDDDLDDDDYDD.

It belongs to the TRAFAC class OBG-HflX-like GTPase superfamily. OBG GTPase family. In terms of assembly, monomer. Requires Mg(2+) as cofactor.

It localises to the cytoplasm. Functionally, an essential GTPase which binds GTP, GDP and possibly (p)ppGpp with moderate affinity, with high nucleotide exchange rates and a fairly low GTP hydrolysis rate. Plays a role in control of the cell cycle, stress response, ribosome biogenesis and in those bacteria that undergo differentiation, in morphogenesis control. In Shewanella piezotolerans (strain WP3 / JCM 13877), this protein is GTPase Obg.